Consider the following 396-residue polypeptide: Actin-related protein 6 (396 aa).

Belongs to the actin family. ARP6 subfamily. Interacts with CBX1 and CBX3.

The protein resides in the cytoplasm. The protein localises to the cytoskeleton. It localises to the nucleus. It is found in the nucleolus. Its function is as follows. Required for formation and/or maintenance of the proper nucleolar structure and function. Plays a dual role in the regulation of ribosomal DNA (rDNA) transcription. In the presence of high glucose, it maintains active rDNA transcription through H2A.Z deposition and under glucose starvation, is required for the repression of rDNA transcription, and this function may be independent of H2A.Z. In Gallus gallus (Chicken), this protein is Actin-related protein 6 (ACTR6).